Reading from the N-terminus, the 256-residue chain is Isoprenyl transferase (256 aa).

A disordered region spans residues 1–22 (MLEKFSKWKGNRSNHTTPSHSL). D36 is an active-site residue. Residue D36 participates in Mg(2+) binding. Substrate contacts are provided by residues 37–40 (GNGR), W41, R49, H53, and 81–83 (STE). N84 functions as the Proton acceptor in the catalytic mechanism. Residues W85, R87, R204, and 210 to 212 (RLS) each bind substrate. E223 contributes to the Mg(2+) binding site.

Belongs to the UPP synthase family. Homodimer. Requires Mg(2+) as cofactor.

Its function is as follows. Catalyzes the condensation of isopentenyl diphosphate (IPP) with allylic pyrophosphates generating different type of terpenoids. In Halalkalibacterium halodurans (strain ATCC BAA-125 / DSM 18197 / FERM 7344 / JCM 9153 / C-125) (Bacillus halodurans), this protein is Isoprenyl transferase.